A 429-amino-acid chain; its full sequence is MSFYRSWIGGRGDLVQRYTSSIRDDAEIAEEVVKVMKAHVTHLAEIGALRKEVADKIVAALEEVDPTELLRGEFEDIHEALEKWLIDKLGEDVGGWVGLARSRNDHVAAAIRLAALKKVGALREAAMRLRCALAARALEYADCPMPSFTHFQPAQVVTFGHYLLAVDELVAEFLHVLAAAEDLAKRSPLGAGPAGGVRTPVDRRRLAELAGFKDVVENTLYASGGRFFALALASAVTSFLVELSRAVDDFIRWNNPLLGYVEAPPEHVSTSSIMPHKRNLVTLEVLRARSEEAVGHYAALSGVVAKVGLGYSLDLQEATRHLWDILNIAIEGVEVLADFVEKIKFNCEKGRRDAELYYATSSDTAEERALRGVPFRKAYFELASEIREGKARLLTVDEALKRPVLGSANPEEVRKSASRRLALCRPKSF.

This sequence belongs to the lyase 1 family. Argininosuccinate lyase subfamily.

The protein localises to the cytoplasm. It catalyses the reaction 2-(N(omega)-L-arginino)succinate = fumarate + L-arginine. The protein operates within amino-acid biosynthesis; L-arginine biosynthesis; L-arginine from L-ornithine and carbamoyl phosphate: step 3/3. This chain is Argininosuccinate lyase, found in Pyrobaculum arsenaticum (strain DSM 13514 / JCM 11321 / PZ6).